A 548-amino-acid polypeptide reads, in one-letter code: Solute carrier family 22 member 7 (548 aa).

The next 12 helical transmembrane spans lie at 21-41 (VALL…PIFL), 146-166 (AAST…GYLS), 180-200 (VSTL…MFAI), 204-224 (LTGS…LEWL), 234-254 (VLSS…GYLI), 259-279 (WLLL…WWVP), 346-366 (ISLC…GLSL), 376-397 (YQTQ…YLSV), 404-423 (LTQA…RLLV), 432-452 (TVLA…AYLF), 466-486 (MGLT…AALL), and 493-513 (LPKL…LLLP). The interval 522 to 548 (ETIQDVERKSAPTSLQEEEMPMKQVQN) is disordered.

Belongs to the major facilitator (TC 2.A.1) superfamily. Organic cation transporter (TC 2.A.1.19) family.

It is found in the basolateral cell membrane. The protein resides in the apical cell membrane. Its subcellular location is the cell membrane. The catalysed reaction is orotate(out) + L-glutamate(in) = orotate(in) + L-glutamate(out). The enzyme catalyses 3',5'-cyclic GMP(in) = 3',5'-cyclic GMP(out). It carries out the reaction GMP(in) = GMP(out). It catalyses the reaction 2'-deoxyguanosine(in) = 2'-deoxyguanosine(out). The catalysed reaction is GDP(in) = GDP(out). The enzyme catalyses guanosine(in) = guanosine(out). It carries out the reaction GTP(in) = GTP(out). It catalyses the reaction 3',5'-cyclic AMP(in) = 3',5'-cyclic AMP(out). The catalysed reaction is creatinine(in) = creatinine(out). The enzyme catalyses prostaglandin E2(out) = prostaglandin E2(in). It carries out the reaction 2-oxoglutarate(in) = 2-oxoglutarate(out). It catalyses the reaction glutarate(in) = glutarate(out). The catalysed reaction is urate(out) = urate(in). The enzyme catalyses estrone 3-sulfate(out) = estrone 3-sulfate(in). Functionally, functions as a Na(+)-independent bidirectional multispecific transporter. Contributes to the renal and hepatic elimination of endogenous organic compounds from the systemic circulation into the urine and bile, respectively. Capable of transporting a wide range of purine and pyrimidine nucleobases, nucleosides and nucleotides, with cGMP, 2'deoxyguanosine and GMP being the preferred substrates. Functions as a pH- and chloride-independent cGMP bidirectional facilitative transporter that can regulate both intracellular and extracellular levels of cGMP and may be involved in cGMP signaling pathways. Mediates orotate/glutamate bidirectional exchange and most likely display a physiological role in hepatic release of glutamate into the blood. Involved in renal secretion and possible reabsorption of creatinine. Able to uptake prostaglandin E2 (PGE2) and may contribute to PGE2 renal excretion. Also transports alpha-ketoglutarate and urate. Apart from the orotate/glutamate exchange, the counterions for the uptake of other SLC22A7/OAT2 substrates remain to be identified. This is Solute carrier family 22 member 7 (SLC22A7) from Pongo abelii (Sumatran orangutan).